The primary structure comprises 277 residues: uncharacterized protein (277 aa).

Disordered regions lie at residues 33–168 and 210–277; these read KNDN…VTTR and NKLL…PIEF. Residues 34–45 show a composition bias toward basic and acidic residues; that stretch reads NDNDERTAHEES. Over residues 86-99 the composition is skewed to basic residues; that stretch reads LKSKSKRKTKKGGS. Basic and acidic residues-rich tracts occupy residues 100–113, 151–168, and 216–230; these read KPREENVNTEKHIV, AKELSYDELKDKLEVTTR, and TNEDEINKSQRNKEK. Residues 231 to 241 are compositionally biased toward basic residues; that stretch reads DRKRRERRTAR. The segment covering 242–258 has biased composition (basic and acidic residues); that stretch reads RKDERKQEKKQEKKQDN. Positions 259–271 are enriched in polar residues; that stretch reads KTSQSFPSSTDMN.

It localises to the cytoplasm. This is an uncharacterized protein from Saccharomyces cerevisiae (strain ATCC 204508 / S288c) (Baker's yeast).